A 173-amino-acid polypeptide reads, in one-letter code: Disulfide bond formation protein B (173 aa).

Residues 1–14 (MIEFLRRIAAHRLA) are Cytoplasmic-facing. The chain crosses the membrane as a helical span at residues 15 to 31 (WSLLAASALFLELSALF). Over 32 to 49 (FQHVLGLHPCVMCVYERI) the chain is Periplasmic. Residues Cys-41 and Cys-44 are joined by a disulfide bond. Residues 50–65 (ATLGVLTAGLLGMVAP) form a helical membrane-spanning segment. The Cytoplasmic segment spans residues 66 to 72 (QKWYVRW). Residues 73–90 (SALLLWGSSAFWGLKLAL) form a helical membrane-spanning segment. At 91–145 (KHVDYQVNPSPFNVCEGFVDFPSWAPLDQWIPWMFYPDGDCSEVTWQFLSFSMPQ) the chain is on the periplasmic side. Cysteines 105 and 131 form a disulfide. Residues 146–164 (WLVAIFAVYLLVFVVVAIG) form a helical membrane-spanning segment. The Cytoplasmic portion of the chain corresponds to 165–173 (NLVKGRCCS).

The protein belongs to the DsbB family.

The protein localises to the cell inner membrane. Its function is as follows. Required for disulfide bond formation in some periplasmic proteins. Acts by oxidizing the DsbA protein. The sequence is that of Disulfide bond formation protein B from Aeromonas hydrophila subsp. hydrophila (strain ATCC 7966 / DSM 30187 / BCRC 13018 / CCUG 14551 / JCM 1027 / KCTC 2358 / NCIMB 9240 / NCTC 8049).